The primary structure comprises 144 residues: Deoxyuridine 5'-triphosphate nucleotidohydrolase (144 aa).

The dUMP site is built by Ser66, Arg133, Phe138, and Gly139.

The protein belongs to the dUTPase family. Homotrimer. Mg(2+) is required as a cofactor.

It carries out the reaction dUTP + H2O = dUMP + diphosphate + H(+). It functions in the pathway pyrimidine metabolism; dUMP biosynthesis; dUMP from dCTP (dUTP route): step 2/2. Its function is as follows. Involved in nucleotide metabolism via production of dUMP, the immediate precursor of thymidine nucleotides, and decreases the intracellular concentration of dUTP so that uracil cannot be incorporated into DNA. The chain is Deoxyuridine 5'-triphosphate nucleotidohydrolase (DUT1) from Encephalitozoon cuniculi (strain GB-M1) (Microsporidian parasite).